A 536-amino-acid polypeptide reads, in one-letter code: Putative UDP-glucuronosyltransferase ugt-47 (536 aa).

Positions 1–21 (MMLQTSTILQLLLFLVGSVSA) are cleaved as a signal peptide. Residues N52 and N308 are each glycosylated (N-linked (GlcNAc...) asparagine). The chain crosses the membrane as a helical span at residues 497 to 517 (IIVPVLFVLLYCLIIPFFKLI).

The protein belongs to the UDP-glycosyltransferase family.

The protein resides in the membrane. It carries out the reaction glucuronate acceptor + UDP-alpha-D-glucuronate = acceptor beta-D-glucuronoside + UDP + H(+). The chain is Putative UDP-glucuronosyltransferase ugt-47 (ugt-47) from Caenorhabditis briggsae.